Consider the following 331-residue polypeptide: MAQLFYDSDADLSLLSGKTVAIIGYGSQGHAHALNLKDSGINVVVGLYDGSRSASKAIADGLEVLSVGEASAKADWIMVLLPDEFQKDVYNKEISPHLQPGKVLSFAHGFNIRFELIKPPSFVDVVMIAPKGPGHTVRWEFQNGQGVPALFAIEQDASGKARDLAMAYAKGIGGTRAGILETNFKEETETDLFGEQAVLCGGLSALVKAGFETLVDAGYQPELAYFECLHEVKLIVDLMVKGGLTAMRDSISNTAEYGDYISGPRLITSETKAEMKRILSDIQDGTFARNFVAECEAGKPEMKRIRNEDAALPVEQVGKGLRAMFSWLKTD.

In terms of domain architecture, KARI N-terminal Rossmann spans 2–182; that stretch reads AQLFYDSDAD…GGTRAGILET (181 aa). NADP(+) contacts are provided by residues 25–28, S51, S53, and 83–86; these read YGSQ and DEFQ. Residue H108 is part of the active site. G134 provides a ligand contact to NADP(+). The KARI C-terminal knotted domain occupies 183-328; sequence NFKEETETDL…KGLRAMFSWL (146 aa). Residues D191, E195, E227, and E231 each coordinate Mg(2+). S252 contributes to the substrate binding site.

This sequence belongs to the ketol-acid reductoisomerase family. Mg(2+) is required as a cofactor.

The catalysed reaction is (2R)-2,3-dihydroxy-3-methylbutanoate + NADP(+) = (2S)-2-acetolactate + NADPH + H(+). It catalyses the reaction (2R,3R)-2,3-dihydroxy-3-methylpentanoate + NADP(+) = (S)-2-ethyl-2-hydroxy-3-oxobutanoate + NADPH + H(+). The protein operates within amino-acid biosynthesis; L-isoleucine biosynthesis; L-isoleucine from 2-oxobutanoate: step 2/4. It participates in amino-acid biosynthesis; L-valine biosynthesis; L-valine from pyruvate: step 2/4. Involved in the biosynthesis of branched-chain amino acids (BCAA). Catalyzes an alkyl-migration followed by a ketol-acid reduction of (S)-2-acetolactate (S2AL) to yield (R)-2,3-dihydroxy-isovalerate. In the isomerase reaction, S2AL is rearranged via a Mg-dependent methyl migration to produce 3-hydroxy-3-methyl-2-ketobutyrate (HMKB). In the reductase reaction, this 2-ketoacid undergoes a metal-dependent reduction by NADPH to yield (R)-2,3-dihydroxy-isovalerate. This Prochlorococcus marinus (strain MIT 9211) protein is Ketol-acid reductoisomerase (NADP(+)).